A 320-amino-acid polypeptide reads, in one-letter code: R2-like ligand binding oxidase (320 aa).

3 residues coordinate Mn(2+): E68, E101, and H104. The 3-(O4'-tyrosyl)-valine (Val-Tyr) cross-link spans 71–162 (VTKDIQPFMS…AAQVRASVVY (92 aa)). Position 101 (E101) interacts with Fe cation. Residues E167, E202, and H205 each coordinate Fe cation.

This sequence belongs to the ribonucleoside diphosphate reductase small chain family. R2-like ligand binding oxidase subfamily. Homodimer. The cofactor is Fe cation. It depends on Mn(2+) as a cofactor.

In terms of biological role, probable oxidase that might be involved in lipid metabolism. In Mycolicibacterium smegmatis (strain ATCC 700084 / mc(2)155) (Mycobacterium smegmatis), this protein is R2-like ligand binding oxidase (nrdB).